The chain runs to 1171 residues: ATP-dependent helicase/deoxyribonuclease subunit B (1171 aa).

Residues 1–301 form the UvrD-like helicase ATP-binding domain; sequence MSLRFVIGRA…AHLEMHYEAR (301 aa). Residue 8–15 participates in ATP binding; that stretch reads GRAGSGKS. The UvrD-like helicase C-terminal domain maps to 281 to 587; the sequence is MKQPRFHSQA…QFANIPPSLD (307 aa). Positions 805, 1129, 1132, and 1138 each coordinate [4Fe-4S] cluster.

Belongs to the helicase family. AddB/RexB type 1 subfamily. As to quaternary structure, heterodimer of AddA and AddB. It depends on Mg(2+) as a cofactor. [4Fe-4S] cluster is required as a cofactor.

Functionally, the heterodimer acts as both an ATP-dependent DNA helicase and an ATP-dependent, dual-direction single-stranded exonuclease. Recognizes the chi site generating a DNA molecule suitable for the initiation of homologous recombination. The AddB subunit has 5' -&gt; 3' nuclease activity but not helicase activity. This Bacillus mycoides (strain KBAB4) (Bacillus weihenstephanensis) protein is ATP-dependent helicase/deoxyribonuclease subunit B.